The primary structure comprises 107 residues: MRGGMGNMQKMMKQMQKMQKDMAKAQEELAEKVVEGTAGGGMVTVKANGQKEILDVIIKEEVVDPEDIDMLQDLVLAATNEALKKVDEITNETMGQFTKGMNMPGLF.

The segment at M1–K24 is disordered. The segment covering M8 to K17 has biased composition (low complexity).

Belongs to the YbaB/EbfC family. As to quaternary structure, homodimer.

Its subcellular location is the cytoplasm. The protein localises to the nucleoid. In terms of biological role, binds to DNA and alters its conformation. May be involved in regulation of gene expression, nucleoid organization and DNA protection. This Bacillus subtilis (strain 168) protein is Nucleoid-associated protein YaaK (yaaK).